The chain runs to 743 residues: Fork head transcription factor 1 (743 aa).

Residues 39–94 (VTMGRKASNSSDCDVHLGDTKAISRQHAKIFYSFPNQRFEISVMGKNGAFVDGEFV) enclose the FHA domain. Disordered stretches follow at residues 214-291 (QPPK…ATQK), 411-450 (GISAGKTEQLNPQKETSRSKTHTSRGENVEDRPQSLLQNG), and 529-743 (QMQG…SSYT). Residues 221–230 (VSPSSIQRLS) are compositionally biased toward polar residues. Residues 291–385 (KPNLSYANLI…EGNFFRRTKK (95 aa)) constitute a DNA-binding region (fork-head). Over residues 434–443 (SRGENVEDRP) the composition is skewed to basic and acidic residues. Residues 529–539 (QMQGPQQVQQQ) show a composition bias toward low complexity. Positions 562-576 (NITSPSPSISVTQRP) are enriched in polar residues. Residues 614–624 (SAGPSSVRSSS) are compositionally biased toward low complexity. 3 stretches are compositionally biased toward polar residues: residues 625-643 (YNSTASESKSEITSHQNLH), 670-686 (TGNQGQRMNSIGNASSF), and 695-726 (ENGSFDTNAKNGNNVDDSSSVRGMNLPSNSSD).

It is found in the nucleus. In terms of biological role, acts as a transcriptional activator for ribosomal protein genes (RPG) that contain a HomolE UAS (upstream activating sequence) in addition to a HomolD promoter element; HomolD plays the role of a TATA box in RPG promoters that do not contain a canonical TATA sequence. Binds to HomolE elements with consensus sequence 3'-ACCCTACCCT-5' (or its inverted form AGGGTAGGGT). This is Fork head transcription factor 1 from Schizosaccharomyces pombe (strain 972 / ATCC 24843) (Fission yeast).